The chain runs to 271 residues: Extracellular metalloprotease ARB_05317 (271 aa).

A signal peptide spans 1–19; the sequence is MRFSVLLTGLAAAGSIATA. Asn-136 is a glycosylation site (N-linked (GlcNAc...) asparagine). His-185 is a Zn(2+) binding site. Residue Glu-186 is part of the active site. Zn(2+) is bound at residue His-189. Asn-200 carries an N-linked (GlcNAc...) asparagine glycan. Cys-222 and Cys-248 are disulfide-bonded.

Belongs to the peptidase M43B family.

The protein localises to the secreted. In terms of biological role, secreted metalloproteinase that allows assimilation of proteinaceous substrates. Plays a pivotal role as a pathogenicity determinant during infections and contributes to the ability of the pathogen to persist within the mammalian host. The polypeptide is Extracellular metalloprotease ARB_05317 (Arthroderma benhamiae (strain ATCC MYA-4681 / CBS 112371) (Trichophyton mentagrophytes)).